Reading from the N-terminus, the 827-residue chain is DNA ligase (827 aa).

Residues 45–49 (DAAYD), 94–95 (SL), and Glu-128 contribute to the NAD(+) site. Lys-130 functions as the N6-AMP-lysine intermediate in the catalytic mechanism. NAD(+)-binding residues include Arg-151, Glu-188, Lys-304, and Lys-328. Zn(2+) contacts are provided by Cys-451, Cys-454, Cys-475, and Cys-481. The BRCT domain maps to 748 to 827 (AAAAAFSGRT…AEWLAMVEAA (80 aa)).

The protein belongs to the NAD-dependent DNA ligase family. LigA subfamily. The cofactor is Mg(2+). Mn(2+) is required as a cofactor.

It catalyses the reaction NAD(+) + (deoxyribonucleotide)n-3'-hydroxyl + 5'-phospho-(deoxyribonucleotide)m = (deoxyribonucleotide)n+m + AMP + beta-nicotinamide D-nucleotide.. DNA ligase that catalyzes the formation of phosphodiester linkages between 5'-phosphoryl and 3'-hydroxyl groups in double-stranded DNA using NAD as a coenzyme and as the energy source for the reaction. It is essential for DNA replication and repair of damaged DNA. This is DNA ligase from Methylobacterium sp. (strain 4-46).